The chain runs to 594 residues: NADH-quinone oxidoreductase subunit C/D (594 aa).

The NADH dehydrogenase I subunit C stretch occupies residues 1–185; that stretch reads MTTGSALYIP…DPFSLNLAKQ (185 aa). An NADH dehydrogenase I subunit D region spans residues 209-594; sequence DYMFLNLGPN…IDFVMADVDR (386 aa).

In the N-terminal section; belongs to the complex I 30 kDa subunit family. The protein in the C-terminal section; belongs to the complex I 49 kDa subunit family. As to quaternary structure, NDH-1 is composed of 13 different subunits. Subunits NuoB, CD, E, F, and G constitute the peripheral sector of the complex.

The protein localises to the cell inner membrane. The enzyme catalyses a quinone + NADH + 5 H(+)(in) = a quinol + NAD(+) + 4 H(+)(out). Functionally, NDH-1 shuttles electrons from NADH, via FMN and iron-sulfur (Fe-S) centers, to quinones in the respiratory chain. The immediate electron acceptor for the enzyme in this species is believed to be ubiquinone. Couples the redox reaction to proton translocation (for every two electrons transferred, four hydrogen ions are translocated across the cytoplasmic membrane), and thus conserves the redox energy in a proton gradient. The sequence is that of NADH-quinone oxidoreductase subunit C/D from Pseudomonas fluorescens (strain SBW25).